Here is a 467-residue protein sequence, read N- to C-terminus: Cysteine--tRNA ligase (467 aa).

Cysteine 30 serves as a coordination point for Zn(2+). The short motif at 32–42 (PTVYDDSHLGH) is the 'HIGH' region element. Residues cysteine 209, histidine 239, and glutamate 243 each contribute to the Zn(2+) site. A 'KMSKS' region motif is present at residues 271–275 (KMSKS). Lysine 274 contributes to the ATP binding site.

This sequence belongs to the class-I aminoacyl-tRNA synthetase family. Monomer. It depends on Zn(2+) as a cofactor.

The protein resides in the cytoplasm. It carries out the reaction tRNA(Cys) + L-cysteine + ATP = L-cysteinyl-tRNA(Cys) + AMP + diphosphate. The protein is Cysteine--tRNA ligase of Aliarcobacter butzleri (strain RM4018) (Arcobacter butzleri).